The following is a 1488-amino-acid chain: Putative E3 ubiquitin-protein ligase LIN (1488 aa).

3 disordered regions span residues 297-330 (GFSMTTRRSNDGLNETTRENIASNSNHSKGEQSS), 351-414 (YDAS…PLRR), and 432-500 (IVSD…SSSS). The span at 366–380 (EPKKNIKDEDVEPKV) shows a compositional bias: basic and acidic residues. The span at 382–411 (RSNQKNQMNSPNISPMESPRRASNYSSTNP) shows a compositional bias: polar residues. The segment covering 432-444 (IVSDHSLSSSPDT) has biased composition (low complexity). Residues 468–486 (SQTPSMNQDNENSLVLNDS) show a composition bias toward polar residues. The U-box domain occupies 512–587 (KPPKDFVCPI…VSWKEQNPEL (76 aa)). 4 WD repeats span residues 1207–1244 (SSNGEVLSLHYLNGQVLSGHADGTIKVWDARKRIPRVI), 1249–1290 (EHKK…DVYD), 1412–1451 (SLSTGLDVHRVAINSDFIFAGTKFGTIEVWLKDKFTRVAS), and 1456–1488 (GGNTKITSLASDADGMMLFVGSSDGKIQVWALD).

As to expression, expressed in roots and nodules.

The enzyme catalyses S-ubiquitinyl-[E2 ubiquitin-conjugating enzyme]-L-cysteine + [acceptor protein]-L-lysine = [E2 ubiquitin-conjugating enzyme]-L-cysteine + N(6)-ubiquitinyl-[acceptor protein]-L-lysine.. It participates in protein modification; protein ubiquitination. In terms of biological role, putative E3 ubiquitin ligase involved in the rhizobial infection process. Plays an important role in the early steps of bacterial symbiont thread formation in roots, and in growth, differentiation and maintenance of nodules. The chain is Putative E3 ubiquitin-protein ligase LIN from Medicago truncatula (Barrel medic).